The sequence spans 246 residues: Ribonuclease PH (246 aa).

Residues Arg91 and 129–131 (GTR) contribute to the phosphate site.

It belongs to the RNase PH family. As to quaternary structure, homohexameric ring arranged as a trimer of dimers.

It catalyses the reaction tRNA(n+1) + phosphate = tRNA(n) + a ribonucleoside 5'-diphosphate. Its function is as follows. Phosphorolytic 3'-5' exoribonuclease that plays an important role in tRNA 3'-end maturation. Removes nucleotide residues following the 3'-CCA terminus of tRNAs; can also add nucleotides to the ends of RNA molecules by using nucleoside diphosphates as substrates, but this may not be physiologically important. Probably plays a role in initiation of 16S rRNA degradation (leading to ribosome degradation) during starvation. The polypeptide is Ribonuclease PH (Burkholderia orbicola (strain MC0-3)).